A 171-amino-acid chain; its full sequence is MTDPRHTVRIAVGATALGVSALGATLPACSAHSGPGSPPSAPSAPAAATVMVEGHTHTISGVVECRTSPAVRTATPSESGTQTTRVNAHDDSASVTLSLSDSTPPDVNGFGISLKIGSVDYQMPYQPVQSPTQVEATRQGKSYTLTGTGHAVIPGQTGMRELPFGVHVTCP.

The N-terminal stretch at 1–28 (MTDPRHTVRIAVGATALGVSALGATLPA) is a signal peptide. Cys29 carries N-palmitoyl cysteine lipidation. A lipid anchor (S-diacylglycerol cysteine) is attached at Cys29.

Its subcellular location is the cell membrane. This is Putative lipoprotein LppO (lppO) from Mycobacterium tuberculosis (strain CDC 1551 / Oshkosh).